The sequence spans 345 residues: L-threonine 3-dehydrogenase (345 aa).

Cys-42 is a binding site for Zn(2+). Catalysis depends on charge relay system residues Thr-44 and His-47. Zn(2+) is bound by residues His-67, Glu-68, Cys-97, Cys-100, Cys-103, and Cys-111. NAD(+) is bound by residues Ile-179, Asp-199, Arg-204, 266 to 268 (LGI), and 290 to 291 (IY).

It belongs to the zinc-containing alcohol dehydrogenase family. As to quaternary structure, homotetramer. The cofactor is Zn(2+).

It localises to the cytoplasm. The enzyme catalyses L-threonine + NAD(+) = (2S)-2-amino-3-oxobutanoate + NADH + H(+). It functions in the pathway amino-acid degradation; L-threonine degradation via oxydo-reductase pathway; glycine from L-threonine: step 1/2. In terms of biological role, catalyzes the NAD(+)-dependent oxidation of L-threonine to 2-amino-3-ketobutyrate. In Rhizobium etli (strain CIAT 652), this protein is L-threonine 3-dehydrogenase.